The primary structure comprises 142 residues: Large ribosomal subunit protein uL22c (142 aa).

Belongs to the universal ribosomal protein uL22 family. Part of the 50S ribosomal subunit.

The protein localises to the plastid. It is found in the chloroplast. This protein binds specifically to 23S rRNA. Functionally, the globular domain of the protein is located near the polypeptide exit tunnel on the outside of the subunit, while an extended beta-hairpin is found that lines the wall of the exit tunnel in the center of the 70S ribosome. The polypeptide is Large ribosomal subunit protein uL22c (rpl22) (Ceratophyllum demersum (Rigid hornwort)).